The primary structure comprises 347 residues: Protein YIPF3 (347 aa).

Positions 1-28 (MATQAAPASGVRNGAGPEWGGFEENIQG) are disordered. N-acetylalanine is present on Ala-2. Over 2-145 (ATQAAPASGV…PIKMVNFPQK (144 aa)) the chain is Cytoplasmic. A helical membrane pass occupies residues 146-166 (VAGELYGPLMLVFTLVAILLH). At 167-184 (GMKTSDTIIREGTLMGTA) the chain is on the lumenal side. The chain crosses the membrane as a helical span at residues 185–205 (IGTCFGYWLGVSSFIYFLAYL). Residues 206–211 (CNAQIT) lie on the Cytoplasmic side of the membrane. The chain crosses the membrane as a helical span at residues 212–234 (MLQMLALLGYGLFGHCIVLFITY). Topologically, residues 235–237 (NIH) are lumenal. The chain crosses the membrane as a helical span at residues 238-260 (LHALFYLFWLLLGGLSTLRMVAV). The Cytoplasmic segment spans residues 261 to 271 (LVSRTVGPTQR). The helical transmembrane segment at 272–292 (LLLCGTLAALHMLFLLYLHFA) threads the bilayer. Topologically, residues 293–347 (YHKVVEGILDTLEGPNIPPMQRVPRDIPAVLPAAKLPVAVVNATAKAIAVTLQSH) are lumenal. N-linked (GlcNAc...) asparagine glycosylation is present at Asn-334.

Belongs to the YIP1 family. Interacts with YIPF4 and YIPF5.

The protein localises to the cell membrane. The protein resides in the golgi apparatus. Its subcellular location is the cis-Golgi network membrane. It is found in the cytoplasm. Its function is as follows. Involved in the maintenance of the Golgi structure. May play a role in hematopoiesis. The polypeptide is Protein YIPF3 (Yipf3) (Rattus norvegicus (Rat)).